The following is a 657-amino-acid chain: Histidine ammonia-lyase (657 aa).

The segment at residues 253–255 (ASG) is a cross-link (5-imidazolinone (Ala-Gly)). Ser-254 carries the post-translational modification 2,3-didehydroalanine (Ser). Phosphothreonine is present on Thr-396. A Phosphoserine modification is found at Ser-635. The residue at position 637 (Thr-637) is a Phosphothreonine. At Ser-648 the chain carries Phosphoserine.

This sequence belongs to the PAL/histidase family. In terms of processing, contains an active site 4-methylidene-imidazol-5-one (MIO), which is formed autocatalytically by cyclization and dehydration of residues Ala-Ser-Gly.

The enzyme catalyses L-histidine = trans-urocanate + NH4(+). Its pathway is amino-acid degradation; L-histidine degradation into L-glutamate; N-formimidoyl-L-glutamate from L-histidine: step 1/3. This chain is Histidine ammonia-lyase (HAL), found in Homo sapiens (Human).